The following is an 862-amino-acid chain: DNA mismatch repair protein MutS (862 aa).

604–611 is an ATP binding site; that stretch reads GPNMAGKS.

This sequence belongs to the DNA mismatch repair MutS family.

Functionally, this protein is involved in the repair of mismatches in DNA. It is possible that it carries out the mismatch recognition step. This protein has a weak ATPase activity. This chain is DNA mismatch repair protein MutS, found in Brevibacillus brevis (strain 47 / JCM 6285 / NBRC 100599).